The following is a 179-amino-acid chain: Large ribosomal subunit protein uL6 (179 aa).

This sequence belongs to the universal ribosomal protein uL6 family. In terms of assembly, part of the 50S ribosomal subunit.

In terms of biological role, this protein binds to the 23S rRNA, and is important in its secondary structure. It is located near the subunit interface in the base of the L7/L12 stalk, and near the tRNA binding site of the peptidyltransferase center. This Mycolicibacterium vanbaalenii (strain DSM 7251 / JCM 13017 / BCRC 16820 / KCTC 9966 / NRRL B-24157 / PYR-1) (Mycobacterium vanbaalenii) protein is Large ribosomal subunit protein uL6.